We begin with the raw amino-acid sequence, 1014 residues long: Klotho (1014 aa).

The signal sequence occupies residues 1 to 34; it reads MLARAPPRRPPRLVLLRLLLLHLLLLALRARCLS. Residues 35–982 are Extracellular-facing; it reads AEPGQGAQTW…TECGFFQTRK (948 aa). Glycosyl hydrolase-1 stretches follow at residues 59–508 and 517–955; these read LHDT…DNGF and LEGT…SNGF. Residues N161, N285, N346, N609, N614, and N696 are each glycosylated (N-linked (GlcNAc...) asparagine). A helical transmembrane segment spans residues 983–1003; sequence SLLVFISFLVFTFIISLALIF. At 1004–1014 the chain is on the cytoplasmic side; the sequence is HYSKKGQRSYK.

It belongs to the glycosyl hydrolase 1 family. Klotho subfamily. Homodimer. Interacts with FGF23 and FGFR1. N-glycosylated. As to expression, membrane-bound protein is present in distal renal tubules, inner ear, ependymal cells of brain choroid plexus, elongating spermatids and mature oocytes (at protein level). Soluble peptide is present in serum (100 pM) and cerebrospinal fluid. Expressed strongly in kidney, moderately in brain choroid plexus, and at low levels in pituitary, placenta, skeletal muscle, urinary bladder, aorta, pancreas, testis, ovary, colon, thyroid gland and adipocytes.

The protein localises to the cell membrane. Its subcellular location is the apical cell membrane. It localises to the secreted. The enzyme catalyses a beta-D-glucuronoside + H2O = D-glucuronate + an alcohol. With respect to regulation, inhibited by D-saccharic acid 1,4-lactone and taurocholic acid. In terms of biological role, may have weak glycosidase activity towards glucuronylated steroids. However, it lacks essential active site Glu residues at positions 241 and 874, suggesting it may be inactive as a glycosidase in vivo. May be involved in the regulation of calcium and phosphorus homeostasis by inhibiting the synthesis of active vitamin D. Essential factor for the specific interaction between FGF23 and FGFR1. The Klotho peptide generated by cleavage of the membrane-bound isoform may be an anti-aging circulating hormone which would extend life span by inhibiting insulin/IGF1 signaling. The chain is Klotho (Kl) from Mus musculus (Mouse).